An 82-amino-acid polypeptide reads, in one-letter code: UPF0154 protein SPD_1662 (82 aa).

Residues 5–25 (LAIVLIVLAFLGGALGGMYLV) traverse the membrane as a helical segment.

This sequence belongs to the UPF0154 family.

Its subcellular location is the cell membrane. The polypeptide is UPF0154 protein SPD_1662 (Streptococcus pneumoniae serotype 2 (strain D39 / NCTC 7466)).